The primary structure comprises 398 residues: Probable pectate lyase P56 (398 aa).

The N-terminal stretch at 1 to 27 (MEYSYRTKINVLFIVLILFVFAALGTA) is a signal peptide. N-linked (GlcNAc...) asparagine glycosylation occurs at Asn-135. Ca(2+)-binding residues include Asp-192, Asp-217, and Asp-221. The N-linked (GlcNAc...) asparagine glycan is linked to Asn-228. The active site involves Arg-273.

It belongs to the polysaccharide lyase 1 family. The cofactor is Ca(2+). As to expression, expressed in anthers and pollen.

It carries out the reaction Eliminative cleavage of (1-&gt;4)-alpha-D-galacturonan to give oligosaccharides with 4-deoxy-alpha-D-galact-4-enuronosyl groups at their non-reducing ends.. The protein operates within glycan metabolism; pectin degradation; 2-dehydro-3-deoxy-D-gluconate from pectin: step 2/5. Might be needed during pollen development and tube growth. The sequence is that of Probable pectate lyase P56 (LAT56) from Solanum lycopersicum (Tomato).